A 322-amino-acid chain; its full sequence is Mas-related G-protein coupled receptor member X3 (322 aa).

The Extracellular portion of the chain corresponds to 1–31 (MDPTIPALGTSQTPINRREETPCYKQTLSLT). A helical membrane pass occupies residues 32-52 (VLTCIISLVGLTGNAVVLWLL). At 53–60 (GFRMRRNA) the chain is on the cytoplasmic side. The chain crosses the membrane as a helical span at residues 61-81 (VSTYILNLAAVDFLFLSGHIV). Residues 82-96 (RSPLRLISIRHPISK) lie on the Extracellular side of the membrane. A helical membrane pass occupies residues 97–117 (IVNPVMTFPYFIGLSMLSAIS). Topologically, residues 118-139 (TERCLSVLWPMWYRCRRPRHLS) are cytoplasmic. The helical transmembrane segment at 140-160 (VVVCVLLWALSLLRSILEWMF) threads the bilayer. The Extracellular segment spans residues 161-177 (CDFLFSGADSVWCETSD). The helical transmembrane segment at 178–198 (FITIAWLIFLCVVLCGSSLVL) threads the bilayer. At 199–213 (LVRILCGSRKMPLTR) the chain is on the cytoplasmic side. A helical transmembrane segment spans residues 214–234 (LYVTILLTVLVFLLCGLPFGI). The Extracellular segment spans residues 235–254 (QWALFSRIHLDWKVLFCHVH). A helical transmembrane segment spans residues 255 to 275 (LISVFLSSLNSSANPIIYFFV). The Cytoplasmic portion of the chain corresponds to 276–322 (GSFRQRQNRQNLKLVLQRALQDTPEVDEGGGRLPEETLELSVSRLEQ).

The protein belongs to the G-protein coupled receptor 1 family. Mas subfamily.

It localises to the cell membrane. In terms of biological role, orphan receptor. Probably involved in the function of nociceptive neurons. May regulate nociceptor function and/or development, including the sensation or modulation of pain. Potently activated by enkephalins. This is Mas-related G-protein coupled receptor member X3 (MRGPRX3) from Macaca mulatta (Rhesus macaque).